The primary structure comprises 97 residues: MRTLSLLLALLFLAAQTLAQPIDEGAEEVITEEPEITETQDPTTIMLIERGIGGDSTDATRSTITCYCRSRCRMLEKNSGTCRSSNCTYTLCCKKTS.

An N-terminal signal peptide occupies residues M1–A19. A propeptide spanning residues Q20 to R61 is cleaved from the precursor. 3 disulfides stabilise this stretch: C66/C93, C68/C82, and C72/C92. Residues T96 to S97 constitute a propeptide that is removed on maturation.

Belongs to the alpha-defensin family. Highly expressed in intestine, expressed at lower levels in spleen, and at very low levels in kidney and lung.

The protein resides in the secreted. In terms of biological role, has antimicrobial activity. The chain is Defensin-A2 from Ornithorhynchus anatinus (Duckbill platypus).